The chain runs to 370 residues: Dual-specificity RNA methyltransferase RlmN (370 aa).

The active-site Proton acceptor is Glu93. Residues 99-337 (EEGRGTLCVS…VTTVRKTRGD (239 aa)) enclose the Radical SAM core domain. Cysteines 106 and 343 form a disulfide. 3 residues coordinate [4Fe-4S] cluster: Cys113, Cys117, and Cys120. Residues 167–168 (GE), Ser199, 221–223 (SLH), and Asn300 each bind S-adenosyl-L-methionine. Cys343 serves as the catalytic S-methylcysteine intermediate.

It belongs to the radical SAM superfamily. RlmN family. [4Fe-4S] cluster is required as a cofactor.

It is found in the cytoplasm. The enzyme catalyses adenosine(2503) in 23S rRNA + 2 reduced [2Fe-2S]-[ferredoxin] + 2 S-adenosyl-L-methionine = 2-methyladenosine(2503) in 23S rRNA + 5'-deoxyadenosine + L-methionine + 2 oxidized [2Fe-2S]-[ferredoxin] + S-adenosyl-L-homocysteine. It catalyses the reaction adenosine(37) in tRNA + 2 reduced [2Fe-2S]-[ferredoxin] + 2 S-adenosyl-L-methionine = 2-methyladenosine(37) in tRNA + 5'-deoxyadenosine + L-methionine + 2 oxidized [2Fe-2S]-[ferredoxin] + S-adenosyl-L-homocysteine. Its function is as follows. Specifically methylates position 2 of adenine 2503 in 23S rRNA and position 2 of adenine 37 in tRNAs. m2A2503 modification seems to play a crucial role in the proofreading step occurring at the peptidyl transferase center and thus would serve to optimize ribosomal fidelity. The protein is Dual-specificity RNA methyltransferase RlmN of Francisella tularensis subsp. holarctica (strain LVS).